The following is a 495-amino-acid chain: Potassium voltage-gated channel subfamily A member 1 (495 aa).

Positions 1 to 30 are disordered; the sequence is MTVMSGENADEASAAPGHPQDGSYPRQADH. Residues 1-128 are tetramerization domain; that stretch reads MTVMSGENAD…FYELGEEAME (128 aa). Residues 1 to 164 are Cytoplasmic-facing; it reads MTVMSGENAD…LLFEYPESSG (164 aa). S23 carries the post-translational modification Phosphoserine. A helical transmembrane segment spans residues 165 to 186; that stretch reads PARVIAIVSVMVILISIVIFCL. The Extracellular portion of the chain corresponds to 187-220; the sequence is ETLPELKDDKDFTGTIHRIDNTTVIYTSNIFTDP. N-linked (GlcNAc...) asparagine glycosylation occurs at N207. Residues 221–242 traverse the membrane as a helical segment; it reads FFIVETLCIIWFSFELVVRFFA. The S-palmitoyl cysteine moiety is linked to residue C243. At 243–253 the chain is on the cytoplasmic side; that stretch reads CPSKTDFFKNI. The helical transmembrane segment at 254 to 274 threads the bilayer; sequence MNFIDIVAIIPYFITLGTEIA. At 275–287 the chain is on the extracellular side; sequence EQEGNQKGEQATS. The helical; Voltage-sensor transmembrane segment at 288–308 threads the bilayer; sequence LAILRVIRLVRVFRIFKLSRH. The Cytoplasmic portion of the chain corresponds to 309-323; it reads SKGLQILGQTLKASM. Residues 310-323 are S4-S5 linker; the sequence is KGLQILGQTLKASM. S322 is modified (phosphoserine; by PKA). A helical membrane pass occupies residues 324-345; that stretch reads RELGLLIFFLFIGVILFSSAVY. At 346–359 the chain is on the extracellular side; sequence FAEAEEAESHFSSI. Residues 360–371 constitute an intramembrane region (helical); the sequence is PDAFWWAVVSMT. Positions 372 to 377 match the Selectivity filter motif; sequence TVGYGD. The stretch at 372–379 is an intramembrane region; that stretch reads TVGYGDMY. Residues 380–386 lie on the Extracellular side of the membrane; that stretch reads PVTIGGK. The chain crosses the membrane as a helical span at residues 387-415; sequence IVGSLCAIAGVLTIALPVPVIVSNFNYFY. Over 416 to 495 the chain is Cytoplasmic; it reads HRETEGEEQA…VNKSKLLTDV (80 aa). Phosphoserine is present on residues S437 and S439. S446 carries the post-translational modification Phosphoserine; by PKA. The PDZ-binding signature appears at 493–495; it reads TDV.

This sequence belongs to the potassium channel family. A (Shaker) (TC 1.A.1.2) subfamily. Kv1.1/KCNA1 sub-subfamily. As to quaternary structure, homotetramer and heterotetramer with other channel-forming alpha subunits, such as KCNA2, KCNA4, KCNA5, KCNA6 and KCNA7. Channel activity is regulated by interaction with the beta subunits KCNAB1 and KCNAB2. Identified in a complex with KCNA2 and KCNAB2. Interacts (via C-terminus) with the PDZ domains of DLG1, DLG2 and DLG4. Interacts with LGI1 within a complex containing LGI1, KCNA4 and KCNAB1. Interacts (via cytoplasmic N-terminal domain) with KCNRG; this inhibits channel activity. Interacts with ANK3; this inhibits channel activity. Interacts (via N-terminus) with STX1A; this promotes channel inactivation. Interacts (via N-terminus) with the heterodimer formed by GNB1 and GNG2; this promotes channel inactivation. Can interact simultaneously with STX1A and the heterodimer formed by GNB1 and GNG2. Interacts with ADAM11. In terms of processing, palmitoylated on Cys-243; which may be required for membrane targeting. Post-translationally, N-glycosylated. Phosphorylated on tyrosine residues. Phosphorylation increases in response to NRG1; this inhibits channel activity. Phosphorylated by PKA. Phosphorylation at Ser-446 regulates channel activity by down-regulating expression at the cell membrane. As to expression, detected in hippocampus, in the middle third of the molecular layer of the dentate gyrus and in stratum radiatum and stratum oriens. Detected in the mossy fiber zone in the hippocampus CA3 region, at or near axon terminals. Detected in brain cortex, at basket cell terminals. Detected adjacent to nodes of Ranvier in juxtaparanodal zones in spinal cord nerve fibers, but also in paranodal regions in some myelinated spinal cord axons. Detected in juxtaparanodal regions adjacent to the nodes of Ranvier in myelinated axons in cerebellar white matter. Detected in sensory neurons. Detected in neurons from the medial nucleus of the trapezoid body. Detected in basolateral amygdala. Detected in the paraventricular nucleus of the hypothalamus. Detected in the islet of Langerhans (at protein level).

The protein localises to the cell membrane. It is found in the membrane. Its subcellular location is the cell projection. It localises to the axon. The protein resides in the cytoplasmic vesicle. The protein localises to the perikaryon. It is found in the endoplasmic reticulum. Its subcellular location is the dendrite. It localises to the cell junction. The protein resides in the synapse. The protein localises to the presynapse. It is found in the presynaptic cell membrane. The catalysed reaction is K(+)(in) = K(+)(out). With respect to regulation, inhibited by 4-aminopyridine (4-AP) and by tetraethylammonium (TEA). Inhibited by kaliotoxin (KTX). Its function is as follows. Voltage-gated potassium channel that mediates transmembrane potassium transport in excitable membranes, primarily in the brain and the central nervous system, but also in the kidney. Contributes to the regulation of the membrane potential and nerve signaling, and prevents neuronal hyperexcitability. Forms tetrameric potassium-selective channels through which potassium ions pass in accordance with their electrochemical gradient. The channel alternates between opened and closed conformations in response to the voltage difference across the membrane. Can form functional homotetrameric channels and heterotetrameric channels that contain variable proportions of KCNA1, KCNA2, KCNA4, KCNA5, KCNA6, KCNA7, and possibly other family members as well; channel properties depend on the type of alpha subunits that are part of the channel. Channel properties are modulated by cytoplasmic beta subunits that regulate the subcellular location of the alpha subunits and promote rapid inactivation of delayed rectifier potassium channels. In vivo, membranes probably contain a mixture of heteromeric potassium channel complexes, making it difficult to assign currents observed in intact tissues to any particular potassium channel family member. Homotetrameric KCNA1 forms a delayed-rectifier potassium channel that opens in response to membrane depolarization, followed by slow spontaneous channel closure. In contrast, a heterotetrameric channel formed by KCNA1 and KCNA4 shows rapid inactivation. Regulates neuronal excitability in hippocampus, especially in mossy fibers and medial perforant path axons, preventing neuronal hyperexcitability. Response to toxins that are selective for KCNA1, respectively for KCNA2, suggests that heteromeric potassium channels composed of both KCNA1 and KCNA2 play a role in pacemaking and regulate the output of deep cerebellar nuclear neurons. May function as down-stream effector for G protein-coupled receptors and inhibit GABAergic inputs to basolateral amygdala neurons. May contribute to the regulation of neurotransmitter release, such as gamma-aminobutyric acid (GABA) release. Plays a role in regulating the generation of action potentials and preventing hyperexcitability in myelinated axons of the vagus nerve, and thereby contributes to the regulation of heart contraction. Required for normal neuromuscular responses. Regulates the frequency of neuronal action potential firing in response to mechanical stimuli, and plays a role in the perception of pain caused by mechanical stimuli, but does not play a role in the perception of pain due to heat stimuli. Required for normal responses to auditory stimuli and precise location of sound sources, but not for sound perception. The use of toxins that block specific channels suggest that it contributes to the regulation of the axonal release of the neurotransmitter dopamine. Required for normal postnatal brain development and normal proliferation of neuronal precursor cells in the brain. Plays a role in the reabsorption of Mg(2+) in the distal convoluted tubules in the kidney and in magnesium ion homeostasis, probably via its effect on the membrane potential. The protein is Potassium voltage-gated channel subfamily A member 1 of Rattus norvegicus (Rat).